Reading from the N-terminus, the 98-residue chain is Putative membrane protein insertion efficiency factor (98 aa).

It belongs to the UPF0161 family.

The protein localises to the cell inner membrane. In terms of biological role, could be involved in insertion of integral membrane proteins into the membrane. The sequence is that of Putative membrane protein insertion efficiency factor from Cupriavidus pinatubonensis (strain JMP 134 / LMG 1197) (Cupriavidus necator (strain JMP 134)).